Here is a 146-residue protein sequence, read N- to C-terminus: Large ribosomal subunit protein uL15 (146 aa).

The span at 1–10 (MTLKLHDLRP) shows a compositional bias: basic and acidic residues. A disordered region spans residues 1 to 41 (MTLKLHDLRPARGSKTARTRVGRGDGSKGKTAGRGTKGTRA).

This sequence belongs to the universal ribosomal protein uL15 family. As to quaternary structure, part of the 50S ribosomal subunit.

Its function is as follows. Binds to the 23S rRNA. This is Large ribosomal subunit protein uL15 from Mycobacterium bovis (strain BCG / Pasteur 1173P2).